The primary structure comprises 245 residues: Chloride intracellular channel protein 2 (245 aa).

The interval 1–96 is required for insertion into the membrane; that stretch reads MASLALNTQA…EEFLEKTLAP (96 aa). Glu-25 provides a ligand contact to glutathione. A G-site motif is present at residues 30–33; it reads CPFC. Cys-30 and Cys-33 are disulfide-bonded. The chain crosses the membrane as a helical span at residues 32-52; the sequence is FCQRLFMILWLKGVKFNVTTI. The region spanning 76–239 is the GST C-terminal domain; the sequence is NKELKTDFIK…PEDKEIENTY (164 aa). His-227 serves as a coordination point for glutathione.

This sequence belongs to the chloride channel CLIC family. Monomer. Interacts with TRAPPC2 and RYR2.

Its subcellular location is the cytoplasm. It localises to the membrane. It catalyses the reaction chloride(in) = chloride(out). The catalysed reaction is tert-butyl hydroperoxide + 2 glutathione = tert-butanol + glutathione disulfide + H2O. The enzyme catalyses cumene hydroperoxide + 2 glutathione = 2-phenylpropan-2-ol + glutathione disulfide + H2O. In the soluble state, catalyzes glutaredoxin-like thiol disulfide exchange reactions with reduced glutathione as electron donor. Displays weak glutathione peroxidase activity. Can insert into membranes and form chloride ion channels. Membrane insertion seems to be redox-regulated and may occur only under oxidizing conditions. Modulates the activity of RYR2 and inhibits calcium influx. This chain is Chloride intracellular channel protein 2, found in Rattus norvegicus (Rat).